Here is a 606-residue protein sequence, read N- to C-terminus: Elongation factor 4 (606 aa).

The tr-type G domain occupies 11-193; that stretch reads DKIRNFSIVA…AIVTRLPPPK (183 aa). GTP is bound by residues 23-28 and 140-143; these read DHGKST and NKVD.

It belongs to the TRAFAC class translation factor GTPase superfamily. Classic translation factor GTPase family. LepA subfamily.

The protein resides in the cell inner membrane. It carries out the reaction GTP + H2O = GDP + phosphate + H(+). Functionally, required for accurate and efficient protein synthesis under certain stress conditions. May act as a fidelity factor of the translation reaction, by catalyzing a one-codon backward translocation of tRNAs on improperly translocated ribosomes. Back-translocation proceeds from a post-translocation (POST) complex to a pre-translocation (PRE) complex, thus giving elongation factor G a second chance to translocate the tRNAs correctly. Binds to ribosomes in a GTP-dependent manner. The sequence is that of Elongation factor 4 from Caulobacter vibrioides (strain ATCC 19089 / CIP 103742 / CB 15) (Caulobacter crescentus).